We begin with the raw amino-acid sequence, 143 residues long: Nucleoside diphosphate kinase (143 aa).

Residues lysine 11, phenylalanine 59, arginine 87, threonine 93, arginine 104, and asparagine 114 each coordinate ATP. Residue histidine 117 is the Pros-phosphohistidine intermediate of the active site.

Belongs to the NDK family. As to quaternary structure, homotetramer. Mg(2+) serves as cofactor.

The protein resides in the cytoplasm. The enzyme catalyses a 2'-deoxyribonucleoside 5'-diphosphate + ATP = a 2'-deoxyribonucleoside 5'-triphosphate + ADP. It catalyses the reaction a ribonucleoside 5'-diphosphate + ATP = a ribonucleoside 5'-triphosphate + ADP. Its function is as follows. Major role in the synthesis of nucleoside triphosphates other than ATP. The ATP gamma phosphate is transferred to the NDP beta phosphate via a ping-pong mechanism, using a phosphorylated active-site intermediate. The protein is Nucleoside diphosphate kinase of Shewanella oneidensis (strain ATCC 700550 / JCM 31522 / CIP 106686 / LMG 19005 / NCIMB 14063 / MR-1).